A 251-amino-acid chain; its full sequence is MRTPFIAGNWKMNKNPKETQEFLDGVKGKLPDASKVETVIGAPAIDLTTLVAGAEGTPLKTAAENCYFEDEGAFTGETSPKALKEMNVDYVIIGHSERRGYFHETDEDINKKAKAIFKNNLLPIICCGESLAQREAGQTEDWVASQIEAALAGLSADQVKVSVLAYEPIWAIGTGKTATADQAQEVVAHIRATVEKLYNKDTADAVRILYGGSVKPANVKELMAKPDIDGGLVGGASMDPESFIALANYQD.

Position 9–11 (9–11) interacts with substrate; it reads NWK. The active-site Electrophile is His95. Glu167 (proton acceptor) is an active-site residue. Substrate-binding positions include Gly173, Ser213, and 234-235; that span reads GG.

Belongs to the triosephosphate isomerase family. As to quaternary structure, homodimer.

It is found in the cytoplasm. The enzyme catalyses D-glyceraldehyde 3-phosphate = dihydroxyacetone phosphate. It functions in the pathway carbohydrate biosynthesis; gluconeogenesis. The protein operates within carbohydrate degradation; glycolysis; D-glyceraldehyde 3-phosphate from glycerone phosphate: step 1/1. Involved in the gluconeogenesis. Catalyzes stereospecifically the conversion of dihydroxyacetone phosphate (DHAP) to D-glyceraldehyde-3-phosphate (G3P). The sequence is that of Triosephosphate isomerase from Lacticaseibacillus casei (strain BL23) (Lactobacillus casei).